Reading from the N-terminus, the 1010-residue chain is Regulator of telomere elongation helicase 1 homolog (1010 aa).

The Helicase ATP-binding domain maps to 7–333 (NGITVNFPFE…KEMLLQLEKT (327 aa)). 42–49 (SPTGTGKT) is an ATP binding site. Residues Cys157, Cys175, Cys184, and Cys220 each contribute to the [4Fe-4S] cluster site. The DEAH box motif lies at 263 to 266 (DEAH). Residues 912–931 (TSDDEDPGRTGDDPTRQAPE) are disordered. Basic and acidic residues predominate over residues 918–931 (PGRTGDDPTRQAPE).

It belongs to the helicase family. RAD3/XPD subfamily.

It localises to the nucleus. The enzyme catalyses ATP + H2O = ADP + phosphate + H(+). A probable ATP-dependent DNA helicase implicated in DNA repair and the maintenance of genomic stability. Acts as an anti-recombinase to counteract toxic recombination and limit crossover during meiosis. Regulates meiotic recombination and crossover homeostasis by physically dissociating strand invasion events and thereby promotes noncrossover repair by meiotic synthesis dependent strand annealing (SDSA) as well as disassembly of D loop recombination intermediates. The protein is Regulator of telomere elongation helicase 1 homolog of Aedes aegypti (Yellowfever mosquito).